A 312-amino-acid chain; its full sequence is tRNA pseudouridine synthase B (312 aa).

Residue Asp37 is the Nucleophile of the active site.

It belongs to the pseudouridine synthase TruB family. Type 1 subfamily.

It carries out the reaction uridine(55) in tRNA = pseudouridine(55) in tRNA. Functionally, responsible for synthesis of pseudouridine from uracil-55 in the psi GC loop of transfer RNAs. The sequence is that of tRNA pseudouridine synthase B from Thermus thermophilus (strain ATCC BAA-163 / DSM 7039 / HB27).